We begin with the raw amino-acid sequence, 365 residues long: Peptide chain release factor 2 (365 aa).

N5-methylglutamine is present on Gln-251.

The protein belongs to the prokaryotic/mitochondrial release factor family. In terms of processing, methylated by PrmC. Methylation increases the termination efficiency of RF2.

The protein localises to the cytoplasm. Peptide chain release factor 2 directs the termination of translation in response to the peptide chain termination codons UGA and UAA. The protein is Peptide chain release factor 2 of Aliarcobacter butzleri (strain RM4018) (Arcobacter butzleri).